A 1073-amino-acid chain; its full sequence is TSC22 domain family protein 1 (1073 aa).

The interval 1 to 98 is required for interaction with TGFBR1 and promotion of TGF-beta signaling; sequence MHQPPESTAA…SQAQLQAQPL (98 aa). Disordered stretches follow at residues 22-110, 125-205, 220-288, 458-486, 607-628, and 742-766; these read MAHP…KKSG, ISSN…PHLP, LHHH…SPAS, VTSE…SVGS, YSQA…QQLQ, and VQQP…QVVP. Residues 36-45 show a composition bias toward low complexity; that stretch reads GSASALNAAG. Over residues 58–70 the composition is skewed to pro residues; it reads FPPPSLLQPPPPA. A compositionally biased stretch (low complexity) spans 84–100; sequence SLNLLSQAQLQAQPLAP. Residues 133-142 are compositionally biased toward acidic residues; it reads EDTESYDDLD. A compositionally biased stretch (basic residues) spans 220–240; the sequence is LHHHHQIHHGHHLQHGHHHPS. A compositionally biased stretch (polar residues) spans 257-271; sequence PVSRKLSTTGSSDSI. Ser-263 bears the Phosphoserine mark. 2 stretches are compositionally biased toward low complexity: residues 272–288 and 465–483; these read TPVA…SPAS and TSGS…YTES. Residues 614-625 are compositionally biased toward pro residues; that stretch reads VQTPLPGAPPPQ. A compositionally biased stretch (polar residues) spans 742–764; the sequence is VQQPSTQVPPSVIQQGAPPSSQV. The interval 1006 to 1027 is leucine-zipper; that stretch reads LKEQIKELIEKNSQLEQENNLL. The disordered stretch occupies residues 1037 to 1073; the sequence is AQFQAQLQTGSPPATTQPQGTTQPPAQPASQGSGPTA. Positions 1044–1073 are enriched in low complexity; that stretch reads QTGSPPATTQPQGTTQPPAQPASQGSGPTA.

The protein belongs to the TSC-22/Dip/Bun family. In terms of assembly, forms homodimers. Forms heterodimers. Component of a complex composed of TSC22D1 (via N-terminus), TGFBR1 and TGFBR2; the interaction between TSC22D1 and TGFBR1 is inhibited by SMAD7 and promoted by TGFB1. Interacts with SMAD7; the interaction requires TGF-beta and the interaction is inhibited by TGFBR1. Interacts with TPT1/fortilin; interaction results in the destabilization of TSC22D1 protein and prevents TSC22D1-mediated apoptosis. Interacts with SMAD4 (via N-terminus). Interacts with ACVRL1/ALK1, ACVR1/ALK2, BMPR1A/ALK3, ACVR1B/ALK4, BMPR1B/ALK6, ACVR2A/ACTRII, and BMPR2. Interacts with SMAD6. Interacts with TFE3; the interaction is enhanced in the presence of TGF-beta. Forms a heterodimer with TSC22D4/THG1. As to quaternary structure, forms a heterodimer with TSC22D4/THG1. Interacts with histone H1-2. Interacts with GNL3. In terms of assembly, interacts with histone H1-2. As to expression, ubiquitously expressed in adult tissues. Expressed in the postmitotic epithelial compartment at the top of intestinal mucosal villi.

The protein localises to the cytoplasm. It is found in the nucleus. Its subcellular location is the cell membrane. It localises to the mitochondrion. Transcriptional repressor. Acts on the C-type natriuretic peptide (CNP) promoter. Acts to promote CASP3-mediated apoptosis. Positively regulates TGF-beta signaling by interacting with SMAD7 which inhibits binding of SMAD7 to TGFBR1, preventing recruitment of SMURF ubiquitin ligases to TGFBR1 and inhibiting SMURF-mediated ubiquitination and degradation of TGFBR1. Contributes to enhancement of TGF-beta signaling by binding to and modulating the transcription activator activity of SMAD4. Promotes TGF-beta-induced transcription of COL1A2; via its interaction with TFE3 at E-boxes in the gene proximal promoter. Plays a role in the repression of hematopoietic precursor cell growth. Promotes IL2 deprivation-induced apoptosis in T-lymphocytes, via repression of TSC22D3/GILZ transcription and activation of the caspase cascade. Functionally, may act to negatively regulate TGFB3 signaling and thereby inhibit cell death in mammary gland cells. In terms of biological role, positively regulates cell death in response to TGFB3 during mammary gland involution. The polypeptide is TSC22 domain family protein 1 (Homo sapiens (Human)).